A 1950-amino-acid chain; its full sequence is E3 ubiquitin-protein ligase UBR1 (1950 aa).

12 residues coordinate Zn(2+): H118, C123, C136, C139, C148, C151, H157, H160, H161, C175, C177, and C189. The UBR-type zinc finger occupies 121 to 194 (RNCGRKFKIG…SPLHCKAEEQ (74 aa)). Residues S296 and S300 each carry the phosphoserine modification. Positions 678 to 681 (HVLH) are ubiquitin-binding loop. D952 lines the Zn(2+) pocket. Residues 1165–1200 (KERKRRLAKKHQARLLAKFNNQQTKFMKEHESEFDE) form a UBC2-binding region (U2BR) region. The Zn(2+) site is built by C1220, C1223, C1295, H1297, H1300, C1303, C1320, and C1323. An RING-type; atypical zinc finger spans residues 1220–1324 (CALCQDSSST…SNAFICPLCQ (105 aa)). Positions 1333 to 1665 (LCQTSKANTG…YEYCGIIKLI (333 aa)) are cap helical domain (CHD). C1703, C1706, H1722, C1727, H1763, and D1775 together coordinate Zn(2+). Disordered regions lie at residues 1826-1846 (RPRR…GEDG) and 1893-1950 (TLQP…REIW). Composition is skewed to acidic residues over residues 1833-1846 (TDED…GEDG) and 1934-1950 (DEDD…REIW). S1938 carries the post-translational modification Phosphoserine.

Belongs to the E3 ubiquitin-protein ligase UBR1-like family. Interacts with UBC2. Interacts with RPN2, RPT1 and RPT6 from the 26S proteasome.

It catalyses the reaction S-ubiquitinyl-[E2 ubiquitin-conjugating enzyme]-L-cysteine + [acceptor protein]-L-lysine = [E2 ubiquitin-conjugating enzyme]-L-cysteine + N(6)-ubiquitinyl-[acceptor protein]-L-lysine.. It participates in protein modification; protein ubiquitination. In terms of biological role, ubiquitin ligase protein which is a component of the N-end rule pathway. Recognizes and binds to proteins bearing specific N-terminal residues that are destabilizing according to the N-end rule, leading to their ubiquitination and subsequent degradation. Recognizes both type-1 and type-2 N-degrons, containing positively charged amino acids (Arg, Lys and His) and bulky and hydrophobic amino acids, respectively. The protein is E3 ubiquitin-protein ligase UBR1 of Saccharomyces cerevisiae (strain ATCC 204508 / S288c) (Baker's yeast).